The primary structure comprises 299 residues: Recombination-associated protein RdgC (299 aa).

The protein belongs to the RdgC family.

The protein resides in the cytoplasm. Its subcellular location is the nucleoid. Functionally, may be involved in recombination. This chain is Recombination-associated protein RdgC, found in Cupriavidus pinatubonensis (strain JMP 134 / LMG 1197) (Cupriavidus necator (strain JMP 134)).